Reading from the N-terminus, the 330-residue chain is Putative [LysW]-L-2-aminoadipate/[LysW]-L-glutamate phosphate reductase (330 aa).

NADP(+) contacts are provided by residues 10–13 (SGYI) and 34–36 (SRR). Residue Cys142 is part of the active site. Asn297 contacts NADP(+).

Belongs to the NAGSA dehydrogenase family. Type 1 subfamily. LysY sub-subfamily.

It localises to the cytoplasm. The catalysed reaction is [amino-group carrier protein]-C-terminal-N-(1-carboxy-5-oxopentan-1-yl)-L-glutamine + phosphate + NADP(+) = [amino-group carrier protein]-C-terminal-N-(1-carboxy-5-phosphooxy-5-oxopentan-1-yl)-L-glutamine + NADPH + H(+). It carries out the reaction [amino-group carrier protein]-C-terminal-gamma-(L-glutamyl-5-semialdehyde)-L-glutamate + phosphate + NADP(+) = [amino-group carrier protein]-C-terminal-gamma-(5-phospho-L-glutamyl)-L-glutamate + NADPH + H(+). It participates in amino-acid biosynthesis; L-lysine biosynthesis via AAA pathway; L-lysine from L-alpha-aminoadipate (Thermus route): step 3/5. The protein operates within amino-acid biosynthesis; L-arginine biosynthesis. Functionally, involved in both the arginine and lysine biosynthetic pathways. The sequence is that of Putative [LysW]-L-2-aminoadipate/[LysW]-L-glutamate phosphate reductase from Thermococcus kodakarensis (strain ATCC BAA-918 / JCM 12380 / KOD1) (Pyrococcus kodakaraensis (strain KOD1)).